Consider the following 424-residue polypeptide: Histone-binding protein RBBP7 (424 aa).

7 WD repeats span residues 47–121 (QWLP…KINH), 127–172 (RARY…LRLR), 180–216 (GLSWNSNLKGHLLSASDDHTVCLWDISAGPKEGKIVD), 227–268 (VVED…HSVD), 274–311 (VNCLSFNPYSEFILATGSADKTVALWDLRNLKLKLHSF), 317–368 (EIFQ…LFIH), and 375–402 (ISDFSWNPNEPWVICSVSEDNIMQIWQM). An interaction with HAT1 region spans residues 359–404 (DGPPELLFIHGGHTAKISDFSWNPNEPWVICSVSEDNIMQIWQMAE).

This sequence belongs to the WD repeat RBAP46/RBAP48/MSI1 family. In terms of assembly, binds directly to helix 1 of the histone fold of histone H4, a region that is not accessible when H4 is in chromatin. Also interacts with histone H2B and HAT1.

The protein resides in the nucleus. Core histone-binding subunit that may target chromatin remodeling factors, histone acetyltransferases and histone deacetylases to their histone substrates in a manner that is regulated by nucleosomal DNA. Component of several complexes which regulate chromatin metabolism. This chain is Histone-binding protein RBBP7 (RBBP7), found in Gallus gallus (Chicken).